The sequence spans 338 residues: MVQLYVSDSVSRISFADGRVIVWSEELGESQYPIETLDGITLFGRPTMTTPFIVEMLKRERDIQLFTTDGHYQGRISTPDVSYAPRLRQQVHRTDDPAFCLSLSKRIVSRKILNQQALIRAHTSGQDVAESIRTMKHSLAWVDRSGSLAELNGFEGNAAKAYFTALGHLVPQEFAFQGRSTRPPLDAFNSMVSLGYSLLYKNIIGAIERHSLNAYIGFLHQDSRGHATLASDLMEVWRAPIIDDTVLRLIADGVVDTRAFSKNSDTGAVFATREATRSIARAFGNRIARTATYIKGDPHRYTFQYALDLQLQSLVRVIEAGHPSRLVDIDITSEPSGA.

Mn(2+) contacts are provided by Glu155, His220, and Glu235.

Belongs to the CRISPR-associated endonuclease Cas1 family. As to quaternary structure, homodimer, forms a heterotetramer with a Cas2 homodimer. Requires Mg(2+) as cofactor. Mn(2+) is required as a cofactor.

Its function is as follows. CRISPR (clustered regularly interspaced short palindromic repeat), is an adaptive immune system that provides protection against mobile genetic elements (viruses, transposable elements and conjugative plasmids). CRISPR clusters contain spacers, sequences complementary to antecedent mobile elements, and target invading nucleic acids. CRISPR clusters are transcribed and processed into CRISPR RNA (crRNA). Acts as a dsDNA endonuclease. Involved in the integration of spacer DNA into the CRISPR cassette. The type III-A Csm effector complex binds crRNA and acts as a crRNA-guided RNase, DNase and cyclic oligoadenylate synthase; binding of target RNA cognate to the crRNA is required for all activities. This is CRISPR-associated endonuclease Cas1 from Mycobacterium tuberculosis (strain CDC 1551 / Oshkosh).